A 295-amino-acid polypeptide reads, in one-letter code: Indole-3-glycerol phosphate synthase (295 aa).

Belongs to the TrpC family.

The catalysed reaction is 1-(2-carboxyphenylamino)-1-deoxy-D-ribulose 5-phosphate + H(+) = (1S,2R)-1-C-(indol-3-yl)glycerol 3-phosphate + CO2 + H2O. It participates in amino-acid biosynthesis; L-tryptophan biosynthesis; L-tryptophan from chorismate: step 4/5. The chain is Indole-3-glycerol phosphate synthase from Synechococcus sp. (strain CC9605).